The sequence spans 557 residues: Isocitrate lyase (557 aa).

A Phosphothreonine modification is found at Thr-53. Ser-106 to Trp-108 lines the substrate pocket. A Mg(2+)-binding site is contributed by Asp-179. The Proton acceptor role is filled by Cys-217. Substrate contacts are provided by residues Gly-218–His-219, Arg-254, Asn-437–Ser-441, and Thr-471.

The protein belongs to the isocitrate lyase/PEP mutase superfamily. Isocitrate lyase family. In terms of assembly, homotetramer. Requires Mg(2+) as cofactor. Phosphorylated in response to elevated glucose levels, leading first to reversible inactivation of the enzyme (short-term inactivation), and at a later stage to proteolytic degradation of the protein (long-term inactivation).

It is found in the cytoplasm. It localises to the secreted. Its subcellular location is the extracellular space. The protein resides in the extracellular matrix. The protein localises to the vacuole. The catalysed reaction is D-threo-isocitrate = glyoxylate + succinate. The enzyme catalyses (2S,3R)-3-hydroxybutane-1,2,3-tricarboxylate = pyruvate + succinate. It functions in the pathway carbohydrate metabolism; glyoxylate cycle; (S)-malate from isocitrate: step 1/2. Its activity is regulated as follows. Phosphorylated and inactivated after addition of glucose to the cell culture (repressing conditions). Catalyzes the formation of succinate and glyoxylate from isocitrate, a key step of the glyoxylate cycle, which operates as an anaplerotic route for replenishing the tricarboxylic acid cycle. Required for growth on ethanol or acetate, but dispensable when fermentable carbon sources are available. Also acts on 2-methylisocitrate. This Saccharomyces cerevisiae (strain ATCC 204508 / S288c) (Baker's yeast) protein is Isocitrate lyase.